We begin with the raw amino-acid sequence, 183 residues long: Small ribosomal subunit protein uS5 (183 aa).

The 61-residue stretch at 11-71 (FLERVVGINR…EEAKKSFFRV (61 aa)) folds into the S5 DRBM domain.

The protein belongs to the universal ribosomal protein uS5 family. As to quaternary structure, part of the 30S ribosomal subunit. Contacts proteins S4 and S8.

With S4 and S12 plays an important role in translational accuracy. Functionally, located at the back of the 30S subunit body where it stabilizes the conformation of the head with respect to the body. This Micrococcus luteus (Micrococcus lysodeikticus) protein is Small ribosomal subunit protein uS5.